Here is a 268-residue protein sequence, read N- to C-terminus: Unknown seed protein 30.1 (268 aa).

Positions 1–22 (MEFAHLTVLSLFCLAFVGITAT) are cleaved as a signal peptide. Positions 68 to 259 (LFFEHDLHPR…GNKAAAWVPN (192 aa)) constitute a BURP domain.

The sequence is that of Unknown seed protein 30.1 from Vicia faba (Broad bean).